The following is a 609-amino-acid chain: Tyrosyl-DNA phosphodiesterase 1 (609 aa).

Residues 1–12 (MSQESSYGKWTI) show a composition bias toward polar residues. Residues 1–155 (MSQESSYGKW…YETSGEGQDI (155 aa)) form a disordered region. Position 61 is a phosphoserine (serine 61). The span at 105–118 (QPKRVLPQEKKHVS) shows a compositional bias: basic and acidic residues. Serine 119 and serine 132 each carry phosphoserine. Threonine 148 bears the Phosphothreonine mark. Residue serine 149 is modified to Phosphoserine. Catalysis depends on histidine 264, which acts as the Nucleophile. A substrate-binding site is contributed by lysine 266. The interaction with DNA stretch occupies residues 401–404 (SIGS). Histidine 494 (proton donor/acceptor) is an active-site residue. Position 496 (lysine 496) interacts with substrate.

The protein belongs to the tyrosyl-DNA phosphodiesterase family. Monomer. As to expression, ubiquitous.

It localises to the nucleus. Its subcellular location is the cytoplasm. Functionally, DNA repair enzyme that can remove a variety of covalent adducts from DNA through hydrolysis of a 3'-phosphodiester bond, giving rise to DNA with a free 3' phosphate. Catalyzes the hydrolysis of dead-end complexes between DNA and the topoisomerase I active site tyrosine residue. Hydrolyzes 3'-phosphoglycolates on protruding 3' ends on DNA double-strand breaks due to DNA damage by radiation and free radicals. Acts on blunt-ended double-strand DNA breaks and on single-stranded DNA. Has low 3'exonuclease activity and can remove a single nucleoside from the 3'end of DNA and RNA molecules with 3'hydroxyl groups. Has no exonuclease activity towards DNA or RNA with a 3'phosphate. The protein is Tyrosyl-DNA phosphodiesterase 1 (Tdp1) of Mus musculus (Mouse).